The primary structure comprises 293 residues: Large ribosomal RNA subunit accumulation protein YCED homolog 1, chloroplastic (293 aa).

Residues 1–42 (MYYPQPTVSLAAAVALLRPSLRRHSQRASSLLRSSTPPPWVS) constitute a chloroplast transit peptide.

The protein belongs to the DUF177 domain family. Highly expressed in shoots and leaves. Detected in roots, embryos and endosperm.

The protein resides in the plastid. It localises to the chloroplast. Plays a role in synthesis, processing and/or stability of 23S rRNA. Required for embryogenesis. May be involved in RPL23 transcript levels regulation in non-photosynthetic plastids. The protein is Large ribosomal RNA subunit accumulation protein YCED homolog 1, chloroplastic of Zea mays (Maize).